Reading from the N-terminus, the 373-residue chain is Alginate lyase (373 aa).

Residues 1-25 (MRLPMQKLLIPTLLGLAMFAGSVNA) form the signal peptide. Residues 66 to 67 (SK), 139 to 140 (HT), and Tyr257 contribute to the substrate site.

It belongs to the polysaccharide lyase 5 family.

It localises to the periplasm. The catalysed reaction is Eliminative cleavage of alginate to give oligosaccharides with 4-deoxy-alpha-L-erythro-hex-4-enuronosyl groups at their non-reducing ends and beta-D-mannuronate at their reducing end.. Its function is as follows. Catalyzes the depolymerization of alginate by cleaving the beta-1,4 glycosidic bond between two adjacent sugar residues via a beta-elimination mechanism. May serve to degrade mislocalized alginate that is trapped in the periplasmic space. The chain is Alginate lyase from Pseudomonas fluorescens.